We begin with the raw amino-acid sequence, 1077 residues long: Eukaryotic translation initiation factor 2-alpha kinase pek-1 (1077 aa).

A signal peptide spans 1 to 23; the sequence is MSVYYIVLAGFLLFMALVPFNAG. The Lumenal segment spans residues 24–453; sequence QQYIDDDIEV…ITLMQTIFSY (430 aa). N-linked (GlcNAc...) asparagine glycosylation is present at Asn-206. Residues 454-474 traverse the membrane as a helical segment; it reads IFNPTAVVSFLAGLIGVTVAV. Topologically, residues 475 to 1077 are cytoplasmic; it reads VYNKIAKSSP…HEVATHKFLQ (603 aa). The Protein kinase domain occupies 604–1076; sequence FEVKKVIGHG…AHEVATHKFL (473 aa). ATP contacts are provided by residues 610-618 and Lys-633; that span reads IGHGGFGVV. The segment at 727–834 is disordered; the sequence is MPPVVGNTTD…FVDGSDDVDN (108 aa). Over residues 732 to 746 the composition is skewed to polar residues; the sequence is GNTTDAENSWSTSAK. The segment covering 766-778 has biased composition (basic and acidic residues); sequence GSDRTTAELKEES. Positions 783 to 796 are enriched in acidic residues; it reads ESDEESDTTEDSSS. Residues 797 to 808 are compositionally biased toward low complexity; that stretch reads SDESPSSSSGSS. Asp-933 acts as the Proton acceptor in catalysis.

Belongs to the protein kinase superfamily. Ser/Thr protein kinase family. GCN2 subfamily. In terms of assembly, forms dimers with HSPA5/BIP in resting cells. Oligomerizes in ER-stressed cells. Post-translationally, autophosphorylated. In terms of processing, N-glycosylated. Expressed in intestinal cells.

The protein localises to the endoplasmic reticulum membrane. It catalyses the reaction L-seryl-[protein] + ATP = O-phospho-L-seryl-[protein] + ADP + H(+). The enzyme catalyses L-threonyl-[protein] + ATP = O-phospho-L-threonyl-[protein] + ADP + H(+). Perturbation in protein folding in the endoplasmic reticulum (ER) promotes reversible dissociation from HSPA5/BIP and oligomerization, resulting in transautophosphorylation and kinase activity induction. In terms of biological role, phosphorylates the alpha subunit of eukaryotic translation-initiation factor 2 (eIF2alpha), leading to its inactivation and thus to a rapid reduction of translational initiation and repression of global protein synthesis. May phosphorylate eIF2alpha during hypoxia. Proposed to have a role in alleviating endoplasmic reticulum stress. In Caenorhabditis elegans, this protein is Eukaryotic translation initiation factor 2-alpha kinase pek-1 (pek-1).